A 265-amino-acid polypeptide reads, in one-letter code: Capsule polysaccharide export inner-membrane protein BexB (265 aa).

Transmembrane regions (helical) follow at residues 37–57, 64–84, 118–138, 151–171, 178–198, and 235–255; these read IGFFWLFVEPLLMTFFIVMMW, KFSTLNMIAFVMTGYPMAMMW, LLEVAGASIAQILFMAILVMI, LIAWFLMAMFAFALGLIICAI, FGKIWGTLSFVLLPISGAFFF, and ESIGFLVVSDLALLLLGLVMV. The 222-residue stretch at 37-258 folds into the ABC transmembrane type-2 domain; it reads IGFFWLFVEP…LLGLVMVKNF (222 aa).

Belongs to the ABC-2 integral membrane protein family.

It is found in the cell inner membrane. May form an ATP-driven capsule polysaccharide export apparatus, in association with the BexA, BexC and BexD proteins. The sequence is that of Capsule polysaccharide export inner-membrane protein BexB (bexB) from Haemophilus influenzae.